Here is a 352-residue protein sequence, read N- to C-terminus: Probable dual-specificity RNA methyltransferase RlmN (352 aa).

Glu-93 serves as the catalytic Proton acceptor. The Radical SAM core domain maps to 99–332; the sequence is TAKRLTVCVS…ATVRQTRGLD (234 aa). Cys-106 and Cys-337 form a disulfide bridge. Cys-113, Cys-117, and Cys-120 together coordinate [4Fe-4S] cluster. S-adenosyl-L-methionine-binding positions include 160-161, Ser-190, 213-215, and Asn-294; these read GE and SLH. Catalysis depends on Cys-337, which acts as the S-methylcysteine intermediate.

It belongs to the radical SAM superfamily. RlmN family. It depends on [4Fe-4S] cluster as a cofactor.

It is found in the cytoplasm. It catalyses the reaction adenosine(2503) in 23S rRNA + 2 reduced [2Fe-2S]-[ferredoxin] + 2 S-adenosyl-L-methionine = 2-methyladenosine(2503) in 23S rRNA + 5'-deoxyadenosine + L-methionine + 2 oxidized [2Fe-2S]-[ferredoxin] + S-adenosyl-L-homocysteine. The enzyme catalyses adenosine(37) in tRNA + 2 reduced [2Fe-2S]-[ferredoxin] + 2 S-adenosyl-L-methionine = 2-methyladenosine(37) in tRNA + 5'-deoxyadenosine + L-methionine + 2 oxidized [2Fe-2S]-[ferredoxin] + S-adenosyl-L-homocysteine. Functionally, specifically methylates position 2 of adenine 2503 in 23S rRNA and position 2 of adenine 37 in tRNAs. This Synechococcus sp. (strain JA-2-3B'a(2-13)) (Cyanobacteria bacterium Yellowstone B-Prime) protein is Probable dual-specificity RNA methyltransferase RlmN.